The sequence spans 427 residues: Trigger factor (427 aa).

The PPIase FKBP-type domain occupies 160–240; sequence GDTLIGDVTK…VKEVKRLELP (81 aa).

The protein belongs to the FKBP-type PPIase family. Tig subfamily.

It localises to the cytoplasm. It carries out the reaction [protein]-peptidylproline (omega=180) = [protein]-peptidylproline (omega=0). In terms of biological role, involved in protein export. Acts as a chaperone by maintaining the newly synthesized protein in an open conformation. Functions as a peptidyl-prolyl cis-trans isomerase. The protein is Trigger factor of Chlorobaculum parvum (strain DSM 263 / NCIMB 8327) (Chlorobium vibrioforme subsp. thiosulfatophilum).